The sequence spans 349 residues: Ethyl acetate hydrolase (349 aa).

The region spanning Y67–D300 is the AB hydrolase-1 domain. S139 acts as the Nucleophile in catalysis. Catalysis depends on residues D293 and H322.

This sequence belongs to the AB hydrolase superfamily. Acetyl esterase family. Homodimer.

It catalyses the reaction ethyl acetate + H2O = ethanol + acetate + H(+). Functionally, esterase that catalyzes the hydrolysis of ethyl acetate. Involved in the degradation of short chain methyl ketones (MEK) such as 2-butanone and 2-hexanone. In vitro, can also hydrolyze vinyl acetate, 4-nitrophenyl acetate, methyl acetate, propyl acetate, benzyl acetate and methyl propionate. The highest activities are obtained with acetic acid esters, but the alcohol group also plays an important role, as compounds with two carbon atoms in the alcohol moiety, i.e., vinyl and ethyl acetate, are by far the preferred substrates. This chain is Ethyl acetate hydrolase, found in Pseudomonas veronii.